The primary structure comprises 216 residues: Octanoyltransferase (216 aa).

The BPL/LPL catalytic domain maps to 31 to 205 (STTRDEVWLV…ELVTLLDYEQ (175 aa)). Substrate is bound by residues 70-77 (RGGQVTYH), 137-139 (SLG), and 150-152 (GLA). The active-site Acyl-thioester intermediate is C168.

This sequence belongs to the LipB family.

It localises to the cytoplasm. The enzyme catalyses octanoyl-[ACP] + L-lysyl-[protein] = N(6)-octanoyl-L-lysyl-[protein] + holo-[ACP] + H(+). It functions in the pathway protein modification; protein lipoylation via endogenous pathway; protein N(6)-(lipoyl)lysine from octanoyl-[acyl-carrier-protein]: step 1/2. In terms of biological role, catalyzes the transfer of endogenously produced octanoic acid from octanoyl-acyl-carrier-protein onto the lipoyl domains of lipoate-dependent enzymes. Lipoyl-ACP can also act as a substrate although octanoyl-ACP is likely to be the physiological substrate. The polypeptide is Octanoyltransferase (Vibrio cholerae serotype O1 (strain ATCC 39315 / El Tor Inaba N16961)).